The primary structure comprises 78 residues: Beta sliding clamp (78 aa).

It belongs to the beta sliding clamp family. As to quaternary structure, forms a ring-shaped head-to-tail homodimer around DNA which binds and tethers DNA polymerases and other proteins to the DNA. The DNA replisome complex has a single clamp-loading complex (3 tau and 1 each of delta, delta', psi and chi subunits) which binds 3 Pol III cores (1 core on the leading strand and 2 on the lagging strand) each with a beta sliding clamp dimer. Additional proteins in the replisome are other copies of gamma, psi and chi, Ssb, DNA helicase and RNA primase.

The protein localises to the cytoplasm. In terms of biological role, confers DNA tethering and processivity to DNA polymerases and other proteins. Acts as a clamp, forming a ring around DNA (a reaction catalyzed by the clamp-loading complex) which diffuses in an ATP-independent manner freely and bidirectionally along dsDNA. Initially characterized for its ability to contact the catalytic subunit of DNA polymerase III (Pol III), a complex, multichain enzyme responsible for most of the replicative synthesis in bacteria; Pol III exhibits 3'-5' exonuclease proofreading activity. The beta chain is required for initiation of replication as well as for processivity of DNA replication. The sequence is that of Beta sliding clamp (dnaN) from Serratia marcescens.